Here is a 1006-residue protein sequence, read N- to C-terminus: Transmembrane channel-like protein 5 (1006 aa).

Residues 1-289 (MSAYYRNNWS…DDPVGSLWGE (289 aa)) form a disordered region. At 1-458 (MSAYYRNNWS…YFNFLRWLLK (458 aa)) the chain is on the extracellular side. 3 stretches are compositionally biased toward polar residues: residues 20–30 (SGSQNRTQGYL), 50–59 (TRSNPYSVAS), and 76–101 (RSLS…SPDH). Over residues 138–149 (AGSSSSGNYAGS) the composition is skewed to low complexity. The span at 239–250 (REPDYSDAENGH) shows a compositional bias: basic and acidic residues. The chain crosses the membrane as a helical span at residues 459-479 (FNIFSFILNFSFIIIPQFTVA). Residues 480–485 (KKNTLQ) are Cytoplasmic-facing. A helical membrane pass occupies residues 486 to 508 (FTGLEFFTGVGYFRDTVMYYGFY). The Extracellular segment spans residues 509–525 (TNSTIQHGNSGASYNMQ). Residues 526–546 (LAYIFTIGACLTTCFFSLLFS) traverse the membrane as a helical segment. The Cytoplasmic segment spans residues 547-619 (MAKYFRNNFI…NQLLTRFSAY (73 aa)). Residues 620–640 (MVAWVVSTGVAIACCAAVYYL) traverse the membrane as a helical segment. Residues 641-654 (AEYNLEFLKTHSNP) lie on the Extracellular side of the membrane. The chain crosses the membrane as a helical span at residues 655-675 (GAVLLLPFVVSCINLAVPCIY). Over 676–698 (SMFRLVERYEMPRHEVYVLLIRN) the chain is Cytoplasmic. A helical membrane pass occupies residues 699–719 (IFLKISIIGILCYYWLNTVAL). At 720-732 (SGEECWETLIGQD) the chain is on the extracellular side. Residues 733-753 (IYRLLLMDFVFSLVNSFLGEF) traverse the membrane as a helical segment. At 754–786 (LRRIIGMQLITSLGLQEFDIARNVLELIYAQTL) the chain is on the cytoplasmic side. A helical membrane pass occupies residues 787 to 807 (VWIGIFFCPLLPFIQMIMLFI). The Extracellular portion of the chain corresponds to 808-835 (MFYSKNISLMMNFQPPSKAWRASQMMTF). Residues 836 to 856 (FIFLLFFPSFTGVLCTLAITI) form a helical membrane-spanning segment. Residues 857 to 900 (WRLKPSADCGPFRGLPLFIHSIYSWIDTLSTRPGYLWVVWIYRN) lie on the Cytoplasmic side of the membrane. A helical transmembrane segment spans residues 901-921 (LIGSVHFFFILTLIVLIITYL). The Extracellular segment spans residues 922-1006 (YWQITEGRKI…RSVQEGNPRA (85 aa)).

Belongs to the TMC family.

The protein resides in the membrane. Probable component of an ion channel. Molecular function hasn't been characterized yet. This is Transmembrane channel-like protein 5 from Homo sapiens (Human).